A 190-amino-acid polypeptide reads, in one-letter code: Protein GrpE (190 aa).

Positions 1–33 (MSEQEKDQNNAEPQVETVEEQQAAAAAEAVEPT) are disordered. Residues 11 to 32 (AEPQVETVEEQQAAAAAEAVEP) show a composition bias toward low complexity.

This sequence belongs to the GrpE family. Homodimer.

It is found in the cytoplasm. In terms of biological role, participates actively in the response to hyperosmotic and heat shock by preventing the aggregation of stress-denatured proteins, in association with DnaK and GrpE. It is the nucleotide exchange factor for DnaK and may function as a thermosensor. Unfolded proteins bind initially to DnaJ; upon interaction with the DnaJ-bound protein, DnaK hydrolyzes its bound ATP, resulting in the formation of a stable complex. GrpE releases ADP from DnaK; ATP binding to DnaK triggers the release of the substrate protein, thus completing the reaction cycle. Several rounds of ATP-dependent interactions between DnaJ, DnaK and GrpE are required for fully efficient folding. The protein is Protein GrpE of Alcanivorax borkumensis (strain ATCC 700651 / DSM 11573 / NCIMB 13689 / SK2).